The primary structure comprises 70 residues: Conotoxin Lt11.6 (70 aa).

Residues Met1–Ala26 form the signal peptide. 4 cysteine pairs are disulfide-bonded: Cys27/Cys41, Cys34/Cys46, Cys40/Cys50, and Cys45/Cys54. A propeptide spanning residues Ala58–Arg70 is cleaved from the precursor.

This sequence belongs to the conotoxin I2 superfamily. Expressed by the venom duct.

Its subcellular location is the secreted. This chain is Conotoxin Lt11.6, found in Conus litteratus (Lettered cone).